Here is a 295-residue protein sequence, read N- to C-terminus: UDP-N-acetylenolpyruvoylglucosamine reductase (295 aa).

In terms of domain architecture, FAD-binding PCMH-type spans Q23–G188. R167 is an active-site residue. The active-site Proton donor is the S217. E287 is a catalytic residue.

The protein belongs to the MurB family. FAD serves as cofactor.

The protein localises to the cytoplasm. The enzyme catalyses UDP-N-acetyl-alpha-D-muramate + NADP(+) = UDP-N-acetyl-3-O-(1-carboxyvinyl)-alpha-D-glucosamine + NADPH + H(+). It participates in cell wall biogenesis; peptidoglycan biosynthesis. Its function is as follows. Cell wall formation. The polypeptide is UDP-N-acetylenolpyruvoylglucosamine reductase (Streptococcus equi subsp. equi (strain 4047)).